The chain runs to 417 residues: MFNKFKEKLGSFKKALSKTIDEKAVEVEPVVVEQMPQSEESLEEEIEPIVEEEALEAALEAESSEAETEAASPAIAHVPIEDLKKAEYRKKLKDLKKVGEKKVEEEKPPEEKKSFFKKVVPKVGFAQKAKALVFNREVYLDNKDLEEPLWELEMGLLESDLALSVSEAIVESVKNQLTGTTKRIGSNTGEIVEAALKKAILEVVSANTFDFDEYVKNREKPVHIVFVGINGTGKTTSISKITNRLLKSGYSVVLAAGDTFRAGAIDQLGIHANRLGVKMIKHQAGADPAAVIYDAVQYAKAHKIDFVLSDTAGRMHTNMNLMAQMEKICRVSTPDLIIFVDEAVAGNDAVERAAQFNEAVPIDGSILTKIDADAKGGAAISIAYITGKPILFFGIGQGYEDLKKFDPEWFVDQLFNQ.

Residues Gly228–Thr235, Asp310–Arg314, and Thr368–Asp371 each bind GTP.

Belongs to the GTP-binding SRP family. FtsY subfamily. In terms of assembly, part of the signal recognition particle protein translocation system, which is composed of SRP and FtsY.

The protein localises to the cell membrane. It is found in the cytoplasm. It carries out the reaction GTP + H2O = GDP + phosphate + H(+). Involved in targeting and insertion of nascent membrane proteins into the cytoplasmic membrane. Acts as a receptor for the complex formed by the signal recognition particle (SRP) and the ribosome-nascent chain (RNC). This is Signal recognition particle receptor FtsY from Methanosarcina acetivorans (strain ATCC 35395 / DSM 2834 / JCM 12185 / C2A).